A 430-amino-acid chain; its full sequence is Enolase (430 aa).

Gln-164 is a binding site for (2R)-2-phosphoglycerate. The Proton donor role is filled by Glu-206. Residues Asp-243, Glu-288, and Asp-315 each coordinate Mg(2+). 4 residues coordinate (2R)-2-phosphoglycerate: Lys-340, Arg-369, Ser-370, and Lys-391. The Proton acceptor role is filled by Lys-340.

This sequence belongs to the enolase family. The cofactor is Mg(2+).

Its subcellular location is the cytoplasm. The protein localises to the secreted. It localises to the cell surface. It carries out the reaction (2R)-2-phosphoglycerate = phosphoenolpyruvate + H2O. It functions in the pathway carbohydrate degradation; glycolysis; pyruvate from D-glyceraldehyde 3-phosphate: step 4/5. Functionally, catalyzes the reversible conversion of 2-phosphoglycerate (2-PG) into phosphoenolpyruvate (PEP). It is essential for the degradation of carbohydrates via glycolysis. The sequence is that of Enolase from Lysinibacillus sphaericus (strain C3-41).